The following is a 360-amino-acid chain: UDP-N-acetylglucosamine--N-acetylmuramyl-(pentapeptide) pyrophosphoryl-undecaprenol N-acetylglucosamine transferase (360 aa).

2 residues coordinate UDP-N-acetyl-alpha-D-glucosamine: serine 198 and glutamine 289.

The protein belongs to the glycosyltransferase 28 family. MurG subfamily.

It is found in the cell membrane. The catalysed reaction is Mur2Ac(oyl-L-Ala-gamma-D-Glu-L-Lys-D-Ala-D-Ala)-di-trans,octa-cis-undecaprenyl diphosphate + UDP-N-acetyl-alpha-D-glucosamine = beta-D-GlcNAc-(1-&gt;4)-Mur2Ac(oyl-L-Ala-gamma-D-Glu-L-Lys-D-Ala-D-Ala)-di-trans,octa-cis-undecaprenyl diphosphate + UDP + H(+). It functions in the pathway cell wall biogenesis; peptidoglycan biosynthesis. In terms of biological role, cell wall formation. Catalyzes the transfer of a GlcNAc subunit on undecaprenyl-pyrophosphoryl-MurNAc-pentapeptide (lipid intermediate I) to form undecaprenyl-pyrophosphoryl-MurNAc-(pentapeptide)GlcNAc (lipid intermediate II). The polypeptide is UDP-N-acetylglucosamine--N-acetylmuramyl-(pentapeptide) pyrophosphoryl-undecaprenol N-acetylglucosamine transferase (Streptococcus pyogenes serotype M5 (strain Manfredo)).